The following is a 491-amino-acid chain: Probable CtpA-like serine protease (491 aa).

Residues 1–22 (MSESKDTTEVNQEVNEKASSQS) form a disordered region. The segment covering 9 to 22 (EVNQEVNEKASSQS) has biased composition (polar residues). A helical transmembrane segment spans residues 34–54 (FIIILIVTILVTAMIAVFATI). Residues 119–201 (TKSFNEDVSG…TKVTLTIERG (83 aa)) enclose the PDZ domain. Catalysis depends on charge relay system residues Ser324, Asp335, and Lys349.

It belongs to the peptidase S41A family.

It is found in the cell membrane. This chain is Probable CtpA-like serine protease, found in Staphylococcus saprophyticus subsp. saprophyticus (strain ATCC 15305 / DSM 20229 / NCIMB 8711 / NCTC 7292 / S-41).